Reading from the N-terminus, the 242-residue chain is Probable transcriptional regulatory protein BTH_I1015 (242 aa).

This sequence belongs to the TACO1 family.

The protein localises to the cytoplasm. In Burkholderia thailandensis (strain ATCC 700388 / DSM 13276 / CCUG 48851 / CIP 106301 / E264), this protein is Probable transcriptional regulatory protein BTH_I1015.